The primary structure comprises 84 residues: Large ribosomal subunit protein bL27 (84 aa).

The segment at 1–24 (MAHKKGAASTKNGRDSNSQRLGVK) is disordered. Residues 9–20 (STKNGRDSNSQR) show a composition bias toward polar residues.

This sequence belongs to the bacterial ribosomal protein bL27 family.

The protein is Large ribosomal subunit protein bL27 of Nocardioides sp. (strain ATCC BAA-499 / JS614).